We begin with the raw amino-acid sequence, 315 residues long: MHREPAKKKAEKRLFDASSFGKDLLAGGVAAAVSKTAVAPIERVKLLLQVQASSKQISPEARYKGMVDCLVRIPREQGFFSFWRGNLANVIRYFPTQALNFAFKDKYKQLFMSGVNKEKQFWRWFLANLASGGAAGATSLCVVYPLDFARTRLGVDIGKGPEERQFKGLGDCIMKIAKSDGIAGLYQGFGVSVQGIIVYRASYFGAYDTVKGLLPKPKKTPFLVSFFIAQVVTTCSGILSYPFDTVRRRMMMQSGEAKRQYKGTLDCFVKIYQHEGISSFFRGAFSNVLRGTGGALVLVLYDKIKEFFHIDIGGR.

Residues 1 to 19 (MHREPAKKKAEKRLFDASS) lie on the Mitochondrial intermembrane side of the membrane. The stretch at 18–110 (SSFGKDLLAG…FAFKDKYKQL (93 aa)) is one Solcar 1 repeat. A helical membrane pass occupies residues 20 to 49 (FGKDLLAGGVAAAVSKTAVAPIERVKLLLQ). Topologically, residues 50–86 (VQASSKQISPEARYKGMVDCLVRIPREQGFFSFWRGN) are mitochondrial matrix. Residues 87-111 (LANVIRYFPTQALNFAFKDKYKQLF) traverse the membrane as a helical segment. 2 residues coordinate ADP: R92 and K104. The Mitochondrial intermembrane segment spans residues 112 to 121 (MSGVNKEKQF). Residues 122 to 142 (WRWFLANLASGGAAGATSLCV) traverse the membrane as a helical segment. Solcar repeat units follow at residues 123–213 (RWFL…VKGL) and 220–307 (TPFL…IKEF). Over 143-190 (VYPLDFARTRLGVDIGKGPEERQFKGLGDCIMKIAKSDGIAGLYQGFG) the chain is Mitochondrial matrix. A helical membrane pass occupies residues 191 to 211 (VSVQGIIVYRASYFGAYDTVK). Over 212–222 (GLLPKPKKTPF) the chain is Mitochondrial intermembrane. Residues 223 to 243 (LVSFFIAQVVTTCSGILSYPF) form a helical membrane-spanning segment. Residues 244–283 (DTVRRRMMMQSGEAKRQYKGTLDCFVKIYQHEGISSFFRG) lie on the Mitochondrial matrix side of the membrane. An ADP-binding site is contributed by R247. Positions 247–252 (RRRMMM) are important for transport activity. The Nucleotide carrier signature motif signature appears at 247–252 (RRRMMM). A helical transmembrane segment spans residues 284-301 (AFSNVLRGTGGALVLVLY). Residues 302–315 (DKIKEFFHIDIGGR) lie on the Mitochondrial intermembrane side of the membrane.

Belongs to the mitochondrial carrier (TC 2.A.29) family. As to quaternary structure, monomer. Expressed in brain, liver, sperm and testis. In testis, expressed at higher level in spermatocytes, while it is expressed at lower level in spermatogonial cells. Expressed in erythrocytes (at protein level).

The protein localises to the mitochondrion inner membrane. It is found in the membrane. It localises to the cell projection. The protein resides in the cilium. Its subcellular location is the flagellum membrane. It carries out the reaction ADP(in) + ATP(out) = ADP(out) + ATP(in). The catalysed reaction is dATP(out) + ADP(in) = dATP(in) + ADP(out). It catalyses the reaction dADP(in) + ADP(out) = dADP(out) + ADP(in). The enzyme catalyses H(+)(in) = H(+)(out). Its activity is regulated as follows. The matrix-open state (m-state) is inhibited by the membrane-permeable bongkrekic acid (BKA). The cytoplasmic-open state (c-state) is inhibited by the membrane-impermeable toxic inhibitor carboxyatractyloside (CATR). Proton transporter activity is inhibited by ADP:ATP antiporter activity. ADP:ATP antiporter that mediates import of ADP into the mitochondrial matrix for ATP synthesis, and export of ATP out to fuel the cell. Cycles between the cytoplasmic-open state (c-state) and the matrix-open state (m-state): operates by the alternating access mechanism with a single substrate-binding site intermittently exposed to either the cytosolic (c-state) or matrix (m-state) side of the inner mitochondrial membrane. Specifically required during spermatogenesis, probably to mediate ADP:ATP exchange in spermatocytes. Large ATP supplies from mitochondria may be critical for normal progression of spermatogenesis during early stages of meiotic prophase I, including DNA double-strand break repair and chromosomal synapsis. In addition to its ADP:ATP antiporter activity, also involved in mitochondrial uncoupling and mitochondrial permeability transition pore (mPTP) activity. Plays a role in mitochondrial uncoupling by acting as a proton transporter: proton transport uncouples the proton flows via the electron transport chain and ATP synthase to reduce the efficiency of ATP production and cause mitochondrial thermogenesis. Proton transporter activity is inhibited by ADP:ATP antiporter activity, suggesting that SLC25A31/ANT4 acts as a master regulator of mitochondrial energy output by maintaining a delicate balance between ATP production (ADP:ATP antiporter activity) and thermogenesis (proton transporter activity). Proton transporter activity requires free fatty acids as cofactor, but does not transport it. Among nucleotides, may also exchange ADP for dATP and dADP. Also plays a key role in mPTP opening, a non-specific pore that enables free passage of the mitochondrial membranes to solutes of up to 1.5 kDa, and which contributes to cell death. It is however unclear if SLC25A31/ANT4 constitutes a pore-forming component of mPTP or regulates it. This is ADP/ATP translocase 4 from Homo sapiens (Human).